Reading from the N-terminus, the 321-residue chain is Lipoyl synthase (321 aa).

Positions 68, 73, 79, 94, 98, 101, and 308 each coordinate [4Fe-4S] cluster. One can recognise a Radical SAM core domain in the interval 80-297 (FNHGTATFMI…KALADELGFT (218 aa)).

Belongs to the radical SAM superfamily. Lipoyl synthase family. [4Fe-4S] cluster is required as a cofactor.

The protein resides in the cytoplasm. It carries out the reaction [[Fe-S] cluster scaffold protein carrying a second [4Fe-4S](2+) cluster] + N(6)-octanoyl-L-lysyl-[protein] + 2 oxidized [2Fe-2S]-[ferredoxin] + 2 S-adenosyl-L-methionine + 4 H(+) = [[Fe-S] cluster scaffold protein] + N(6)-[(R)-dihydrolipoyl]-L-lysyl-[protein] + 4 Fe(3+) + 2 hydrogen sulfide + 2 5'-deoxyadenosine + 2 L-methionine + 2 reduced [2Fe-2S]-[ferredoxin]. Its pathway is protein modification; protein lipoylation via endogenous pathway; protein N(6)-(lipoyl)lysine from octanoyl-[acyl-carrier-protein]: step 2/2. In terms of biological role, catalyzes the radical-mediated insertion of two sulfur atoms into the C-6 and C-8 positions of the octanoyl moiety bound to the lipoyl domains of lipoate-dependent enzymes, thereby converting the octanoylated domains into lipoylated derivatives. The protein is Lipoyl synthase of Shewanella baltica (strain OS185).